The sequence spans 81 residues: Photosystem I iron-sulfur center (81 aa).

4Fe-4S ferredoxin-type domains are found at residues 2-31 (AHSV…MISW) and 39-68 (IASA…VRVY). Residues cysteine 11, cysteine 14, cysteine 17, cysteine 21, cysteine 48, cysteine 51, cysteine 54, and cysteine 58 each contribute to the [4Fe-4S] cluster site.

In terms of assembly, the eukaryotic PSI reaction center is composed of at least 11 subunits. It depends on [4Fe-4S] cluster as a cofactor.

It localises to the plastid. It is found in the chloroplast thylakoid membrane. It catalyses the reaction reduced [plastocyanin] + hnu + oxidized [2Fe-2S]-[ferredoxin] = oxidized [plastocyanin] + reduced [2Fe-2S]-[ferredoxin]. Apoprotein for the two 4Fe-4S centers FA and FB of photosystem I (PSI); essential for photochemical activity. FB is the terminal electron acceptor of PSI, donating electrons to ferredoxin. The C-terminus interacts with PsaA/B/D and helps assemble the protein into the PSI complex. Required for binding of PsaD and PsaE to PSI. PSI is a plastocyanin-ferredoxin oxidoreductase, converting photonic excitation into a charge separation, which transfers an electron from the donor P700 chlorophyll pair to the spectroscopically characterized acceptors A0, A1, FX, FA and FB in turn. In Anthoceros angustus (Hornwort), this protein is Photosystem I iron-sulfur center (psaC).